Consider the following 488-residue polypeptide: Secreted triacylglycerol lipase LIP1 (488 aa).

The signal sequence occupies residues M1 to A26. C119 and C288 form a disulfide bridge. N-linked (GlcNAc...) asparagine glycosylation occurs at N183. S201 acts as the Nucleophile in catalysis. N316 is a glycosylation site (N-linked (GlcNAc...) asparagine). Catalysis depends on residues D348 and H382. The interval S461 to A488 is disordered. Basic residues predominate over residues S469 to K480.

This sequence belongs to the AB hydrolase superfamily. Lipase family. Class Lip subfamily.

It localises to the secreted. It catalyses the reaction a triacylglycerol + H2O = a diacylglycerol + a fatty acid + H(+). It carries out the reaction a monoacylglycerol + H2O = glycerol + a fatty acid + H(+). The catalysed reaction is a diacylglycerol + H2O = a monoacylglycerol + a fatty acid + H(+). Inhibited by different metal ions including Fe(2+), Fe(3+), Cu(2+), and Zn(2+). The monovalent ions Na(+) and K(+) exhibit less dramatic inhibition. Functionally, secreted lipase that releases free fatty acids from monoacylglycerol and triacylglycerol but has no phospholipase or lysophospholipase activities. Has minor esterase activity. Due to an absence of fatty acid synthase genes in Malassezia species, secretory lipases are essential for the yeast to generate free fatty acids from degradation of sebum and assimilate them as lipid sources for growth. Plays important roles not only in lipid metabolism but also in the immune response of host cells and pathogenesis. Hydrolyzes lipids, such as Tween 20, 40 and 80, with Tween 80 being the best substrate. The sequence is that of Secreted triacylglycerol lipase LIP1 from Malassezia furfur (Pityriasis versicolor infection agent).